Here is a 434-residue protein sequence, read N- to C-terminus: Chaperone SurA (434 aa).

An N-terminal signal peptide occupies residues 1–22 (MKHSKKIVTALLALAMSQTVMA). 2 PpiC domains span residues 173-274 (EVEF…KVMD) and 283-383 (VEEV…QLMD).

Its subcellular location is the periplasm. The catalysed reaction is [protein]-peptidylproline (omega=180) = [protein]-peptidylproline (omega=0). Its function is as follows. Chaperone involved in the correct folding and assembly of outer membrane proteins. Recognizes specific patterns of aromatic residues and the orientation of their side chains, which are found more frequently in integral outer membrane proteins. May act in both early periplasmic and late outer membrane-associated steps of protein maturation. This chain is Chaperone SurA, found in Shewanella denitrificans (strain OS217 / ATCC BAA-1090 / DSM 15013).